Here is a 141-residue protein sequence, read N- to C-terminus: Large ribosomal subunit protein uL16 (141 aa).

Residues 1-16 (MLMPRKPPKGFRKPHH) show a composition bias toward basic residues. The interval 1–27 (MLMPRKPPKGFRKPHHPDRSGASKGGN) is disordered.

The protein belongs to the universal ribosomal protein uL16 family. In terms of assembly, part of the 50S ribosomal subunit.

Functionally, binds 23S rRNA and is also seen to make contacts with the A and possibly P site tRNAs. This chain is Large ribosomal subunit protein uL16, found in Salinispora arenicola (strain CNS-205).